The primary structure comprises 552 residues: Scaffold protein (552 aa).

The protein belongs to the poxviridae protein D13 family. In terms of assembly, homotrimer. Self-assembles to form a layer. Interacts with A17 (via N-terminus); this interaction is necessary for D13 association with membranes.

Its subcellular location is the membrane. Functionally, scaffold protein which forms a transitory spherical honeycomb lattice providing curvature and rigidity to the convex membrane of crescent and immature virions (IV). This association occurs concomitantly with viral membrane formation. Targeted by the drug rifampicin, which prevents the formation of this lattice, and hence virus morphogenesis. In the presence of rifampicin, irregularly shaped membranes that lack the honeycomb layer accumulate around areas of electron-dense viroplasm. This layer is lost from virions during maturation from IV to mature virion (MV), through the proteolysis of A17 N-terminus. This chain is Scaffold protein, found in Vertebrata (FPV).